Here is a 908-residue protein sequence, read N- to C-terminus: MNARIDIGNEAFSAAELATAESRASATPMMEQYIEIKANNPGSLLFYRMGDFYELFFEDALEASRALGITLTKRGQHMGQDIPMCGVPVHAADDYLQKLISLGFRVAVCEQIEDPAQAKKRGAKSVVKRDVIRLVTPGTITEEKLLSPSESNYLMALARIRGGAEPQLALAWIDISTGVFRLAETESSRLLADILRIDPRELILPDTIFHDAELKPVFDVLGRTAVPQPSVLFDSASAEGRIARYFGVSTLDGFGSFSRAELAAAAAAVAYVEKTQIAERPPLGKPERESAASTLFIDPATRANLELARTLSGDRNGSLLKAIDRTVTGGGARLLAERLMSPLTDPARINARLDSIGFLIEEPSLCGKLRDTLKHVPDMPRALSRLALDRGGPRDLWAIRQGLQAAGGLADLLASAMLPEELDQALSGLQALPAGLETLLAETLADELPLLKRDGGFLRDGASAELDEVRALRDQSRRVIAGLQLQYAEETGIRSLKIKHNNILGYFIEVTAGNAAPMTETSEAKSRFIHRQTMASAMRFTTTELADLESRIANAADRALTIELEAFDRMTAAVVAQAESIKSGARALAVIDVAAGLALLAEEQAYCRPQVDGSKMFAIEGGRHPVVEQALRRQAGGPFVANNCDLSPKTGDKDGAIWLLTGPNMGGKSTFLRQNALIAIMAQMGSFVPATSAHIGIVDRLFSRVGASDDLARGRSTFMVEMVETAAILNQASDRSLVILDEIGRGTATFDGLSIAWAAVEHLHEANRCRGLFATHFHELTVLSEKLGRLSNATMRVKEWDGDVIFLHEVGPGAADRSYGIQVARLAGLPASVVARARDVLTRLEDADRKNPASQLIDDLPLFQVAVRREDAARGPSKVEEALRAMSLDDMTPREAMDALYDLKKKLK.

An ATP-binding site is contributed by 662–669; the sequence is GPNMGGKS.

Belongs to the DNA mismatch repair MutS family.

In terms of biological role, this protein is involved in the repair of mismatches in DNA. It is possible that it carries out the mismatch recognition step. This protein has a weak ATPase activity. The polypeptide is DNA mismatch repair protein MutS (Rhizobium etli (strain ATCC 51251 / DSM 11541 / JCM 21823 / NBRC 15573 / CFN 42)).